The following is a 690-amino-acid chain: Choline transporter-like 1 (690 aa).

Residues 23–43 traverse the membrane as a helical segment; the sequence is IFWLVLYVVFWIALIVIAVFS. N-linked (GlcNAc...) asparagine glycosylation is present at Asn-134. The next 4 membrane-spanning stretches (helical) occupy residues 203–223, 237–259, 282–302, and 334–354; these read LYKAWPTIVLICALSLVFSIV, WLICIIVVVASVGITGVLWWSYY, ATIYVLAIAATCIMIILLVVI, and LLAFLALSVFLAFWVVVVVCL. Asn-391 is a glycosylation site (N-linked (GlcNAc...) asparagine). 4 helical membrane passes run 415-435, 464-484, 565-585, and 594-614; these read IYIIGLIWTSEFIFACQQLAI, LGSVAKGSLIITIFKIPRLIL, FVLFLGKLAVASICGLISILL, and FYMAPVIIITVFAFFIAHIIL.

Belongs to the CTL (choline transporter-like) family.

The protein localises to the membrane. In Anopheles gambiae (African malaria mosquito), this protein is Choline transporter-like 1.